Consider the following 128-residue polypeptide: uncharacterized protein (128 aa).

Positions 1-50 (MSNEQGKGMGFFGNKGKPASEKKDEKKTKLDLDYKPDLNPSTPYDPTLPV) are disordered. Basic and acidic residues predominate over residues 18 to 36 (PASEKKDEKKTKLDLDYKP).

This is an uncharacterized protein from Bacillus anthracis.